The primary structure comprises 494 residues: Cobyric acid synthase (494 aa).

Residues 252–444 (DLNIAVIRLP…LHGLFDNGPW (193 aa)) enclose the GATase cobBQ-type domain. The Nucleophile role is filled by C333. The active site involves H436.

The protein belongs to the CobB/CobQ family. CobQ subfamily.

It participates in cofactor biosynthesis; adenosylcobalamin biosynthesis. Functionally, catalyzes amidations at positions B, D, E, and G on adenosylcobyrinic A,C-diamide. NH(2) groups are provided by glutamine, and one molecule of ATP is hydrogenolyzed for each amidation. The polypeptide is Cobyric acid synthase (Nostoc punctiforme (strain ATCC 29133 / PCC 73102)).